The primary structure comprises 468 residues: ATP synthase subunit beta (468 aa).

ATP is bound at residue 155–162 (GGAGVGKT).

Belongs to the ATPase alpha/beta chains family. F-type ATPases have 2 components, CF(1) - the catalytic core - and CF(0) - the membrane proton channel. CF(1) has five subunits: alpha(3), beta(3), gamma(1), delta(1), epsilon(1). CF(0) has three main subunits: a(1), b(2) and c(9-12). The alpha and beta chains form an alternating ring which encloses part of the gamma chain. CF(1) is attached to CF(0) by a central stalk formed by the gamma and epsilon chains, while a peripheral stalk is formed by the delta and b chains.

Its subcellular location is the cell membrane. The enzyme catalyses ATP + H2O + 4 H(+)(in) = ADP + phosphate + 5 H(+)(out). Produces ATP from ADP in the presence of a proton gradient across the membrane. The catalytic sites are hosted primarily by the beta subunits. This is ATP synthase subunit beta from Streptococcus agalactiae serotype III (strain NEM316).